The following is a 152-amino-acid chain: Coiled-coil domain-containing protein 182 (152 aa).

The stretch at 46–109 (ADLEILQQKV…RLREEEDRGI (64 aa)) forms a coiled coil.

The chain is Coiled-coil domain-containing protein 182 (Ccdc182) from Mus musculus (Mouse).